Reading from the N-terminus, the 396-residue chain is General transcription factor IIH subunit 2 (396 aa).

Positions 60–236 (HLYVVVDGSR…HYKELLARHV (177 aa)) constitute a VWFA domain. Tyrosine 95 carries the phosphotyrosine modification. The C4-type zinc finger occupies 292–309 (CPQCRAKYCELPVECKIC).

It belongs to the GTF2H2 family. As to quaternary structure, component of the TFIID-containing RNA polymerase II pre-initiation complex that is composed of TBP and at least GTF2A1, GTF2A2, GTF2E1, GTF2E2, GTF2F1, GTF2H2, GTF2H3, GTF2H4, GTF2H5, GTF2B, TCEA1, ERCC2 and ERCC3. Component of the 7-subunit TFIIH core complex composed of XPB/ERCC3, XPD/ERCC2, GTF2H1, GTF2H2, GTF2H3, GTF2H4 and GTF2H5, which is active in NER. The core complex associates with the 3-subunit CDK-activating kinase (CAK) module composed of CCNH/cyclin H, CDK7 and MNAT1 to form the 10-subunit holoenzyme (holo-TFIIH) active in transcription. Interacts with XPB, XPD, GTF2H1 and GTF2H3.

Its subcellular location is the nucleus. Component of the general transcription and DNA repair factor IIH (TFIIH) core complex, which is involved in general and transcription-coupled nucleotide excision repair (NER) of damaged DNA and, when complexed to CAK, in RNA transcription by RNA polymerase II. In NER, TFIIH acts by opening DNA around the lesion to allow the excision of the damaged oligonucleotide and its replacement by a new DNA fragment. In transcription, TFIIH has an essential role in transcription initiation. When the pre-initiation complex (PIC) has been established, TFIIH is required for promoter opening and promoter escape. Phosphorylation of the C-terminal tail (CTD) of the largest subunit of RNA polymerase II by the kinase module CAK controls the initiation of transcription. The N-terminus of GTF2H2 interacts with and regulates XPD whereas an intact C-terminus is required for a successful escape of RNAP II form the promoter. In Rattus norvegicus (Rat), this protein is General transcription factor IIH subunit 2 (Gtf2h2).